Here is a 316-residue protein sequence, read N- to C-terminus: Porphobilinogen deaminase (316 aa).

C245 bears the S-(dipyrrolylmethanemethyl)cysteine mark.

Belongs to the HMBS family. In terms of assembly, monomer. Requires dipyrromethane as cofactor.

The catalysed reaction is 4 porphobilinogen + H2O = hydroxymethylbilane + 4 NH4(+). Its pathway is porphyrin-containing compound metabolism; protoporphyrin-IX biosynthesis; coproporphyrinogen-III from 5-aminolevulinate: step 2/4. It functions in the pathway porphyrin-containing compound metabolism; chlorophyll biosynthesis. Tetrapolymerization of the monopyrrole PBG into the hydroxymethylbilane pre-uroporphyrinogen in several discrete steps. This is Porphobilinogen deaminase from Synechococcus sp. (strain CC9311).